The sequence spans 169 residues: Large ribosomal subunit protein uL10 (169 aa).

The protein belongs to the universal ribosomal protein uL10 family. In terms of assembly, part of the ribosomal stalk of the 50S ribosomal subunit. The N-terminus interacts with L11 and the large rRNA to form the base of the stalk. The C-terminus forms an elongated spine to which L12 dimers bind in a sequential fashion forming a multimeric L10(L12)X complex.

Forms part of the ribosomal stalk, playing a central role in the interaction of the ribosome with GTP-bound translation factors. This Onion yellows phytoplasma (strain OY-M) protein is Large ribosomal subunit protein uL10.